The sequence spans 639 residues: Muscarinic acetylcholine receptor M3 (639 aa).

Topologically, residues 1–115 (MLTHYQLCFQ…DPLGGHAVWQ (115 aa)) are extracellular. N-linked (GlcNAc...) asparagine glycans are attached at residues Asn-16, Asn-44, Asn-45, Asn-54, Asn-97, and Asn-101. The helical transmembrane segment at 116–139 (VVLIAFLTGIIALVTIIGNILVIV) threads the bilayer. Residues 140–152 (SFKVNKQLKTVNN) are Cytoplasmic-facing. The chain crosses the membrane as a helical span at residues 153–173 (YFLLSLACADLIIGVISMNLF). At 174 to 190 (TTYIIMGHWALGNLACD) the chain is on the extracellular side. Cys-189 and Cys-269 are disulfide-bonded. Residues 191 to 212 (LWLSIDYVASNASVMNLLVISF) traverse the membrane as a helical segment. Residues 213–232 (DRYFSITRPLTYRAKRTTKR) lie on the Cytoplasmic side of the membrane. The chain crosses the membrane as a helical span at residues 233 to 255 (AGVMIGLAWIISFVLWAPAILFW). The Extracellular portion of the chain corresponds to 256–277 (QYFVGKRTVPLDECFIQFLSEP). A helical membrane pass occupies residues 278-300 (IITFGTAIAAFYLPVTIMSILYW). At 301-542 (RIYKETEKRT…LIKEKKAAQT (242 aa)) the chain is on the cytoplasmic side. 2 disordered regions span residues 370–404 (PNTD…DEED) and 431–471 (LPSS…GGSF). Low complexity predominate over residues 382 to 393 (SDSWNNNDAAAS). A compositionally biased stretch (basic and acidic residues) spans 443-454 (ELQKSDTDSQEK). A helical membrane pass occupies residues 543-563 (LSAILFAFIITWTPYNIMVLV). Topologically, residues 564–576 (NTFCDCVPKTVWN) are extracellular. The chain crosses the membrane as a helical span at residues 577 to 596 (LGYWLCYINSTVNPVCYALC). The Cytoplasmic segment spans residues 597-639 (NKMFRNTFKMLLLCQCDKRKRRKQQYQQRQSVIFHKRIPREAS).

This sequence belongs to the G-protein coupled receptor 1 family. Muscarinic acetylcholine receptor subfamily. CHRM3 sub-subfamily. In terms of tissue distribution, brain, heart atria, and ventricle.

The protein localises to the cell membrane. Its subcellular location is the postsynaptic cell membrane. Its function is as follows. The muscarinic acetylcholine receptor mediates various cellular responses, including inhibition of adenylate cyclase, breakdown of phosphoinositides and modulation of potassium channels through the action of G proteins. Primary transducing effect is Pi turnover. The polypeptide is Muscarinic acetylcholine receptor M3 (CHRM3) (Gallus gallus (Chicken)).